The chain runs to 290 residues: Undecaprenyl-diphosphatase (290 aa).

Helical transmembrane passes span Met1–Val21, Met49–Trp69, Leu101–Ala121, Val126–Trp146, Ile160–Leu180, Tyr203–Val223, Val232–Leu252, and Val266–Ala286.

Belongs to the UppP family.

The protein resides in the cell inner membrane. It catalyses the reaction di-trans,octa-cis-undecaprenyl diphosphate + H2O = di-trans,octa-cis-undecaprenyl phosphate + phosphate + H(+). In terms of biological role, catalyzes the dephosphorylation of undecaprenyl diphosphate (UPP). Confers resistance to bacitracin. The protein is Undecaprenyl-diphosphatase of Alkalilimnicola ehrlichii (strain ATCC BAA-1101 / DSM 17681 / MLHE-1).